The following is a 2178-amino-acid chain: Toxin A (2178 aa).

The tract at residues 1-93 is four-helical bundle; that stretch reads MLITREQLMK…RELIKNSRTS (93 aa). A GT44 domain is found at 98-474; sequence KNLSFIWIGG…KPEVNSTVFF (377 aa). Residues 98–474 are glucosyltransferase region; sequence KNLSFIWIGG…KPEVNSTVFF (377 aa). Residues 98–474 are N-acetylglucosaminyltransferase region; that stretch reads KNLSFIWIGG…KPEVNSTVFF (377 aa). Residues 103–105, N141, 267–271, and 284–286 each bind UDP-N-acetyl-alpha-D-glucosamine; these read IWI, SDILR, and DLD. The Mg(2+) site is built by D284, D286, and E520. Residue 523–525 coordinates UDP-N-acetyl-alpha-D-glucosamine; the sequence is SSW. Residues 549–806 are autoprocessing region; sequence NYEDGLNFNK…RVEQLNKVAE (258 aa). 1D-myo-inositol hexakisphosphate-binding residues include N557, K607, and K651. In terms of domain architecture, Peptidase C80 spans 574-787; sequence VNSTKIYENY…QISNKYVVYW (214 aa). H657 serves as the catalytic For protease activity. C707 acts as the Nucleophile; for protease activity in catalysis. 1D-myo-inositol hexakisphosphate is bound by residues 758–759 and K782; that span reads KR. The tract at residues 807–1485 is translocation region; sequence FAKDINSIIQ…VYMEGKIFLN (679 aa). Cell wall-binding repeat units follow at residues 1799–1818, 1820–1839, 1870–1889, 1890–1909, 1910–1929, 1931–1950, 1951–1970, 2004–2023, 2024–2043, 2045–2060, 2064–2083, 2114–2133, 2134–2153, and 2155–2174; these read EYGW…INLI, KKGY…NTGV, YTGW…NSKA, VTGL…NGQM, QIKW…NTGE, IIGW…EGRL, LTGY…NING, YKGW…DSIA, VTGS…KTAV, TNGW…YVSN, VLGY…STGI, YTGW…YNSA, VTGW…KTGA, and TTGL…KGEQ.

Belongs to the clostridial glucosylating toxin (LCGT) family. Mn(2+) is required as a cofactor. Mg(2+) serves as cofactor. Post-translationally, undergoes autocatalytic cleavage to release the N-terminal part (N-acetylglucosaminyltransferase TcdA), which constitutes the active part of the toxin, in the host cytosol. 1D-myo-inositol hexakisphosphate-binding (InsP6) activates the peptidase C80 domain and promotes autoprocessing.

The protein resides in the secreted. It is found in the host endosome membrane. It localises to the host cytoplasm. Its subcellular location is the host cytosol. The protein localises to the host cell membrane. The catalysed reaction is L-threonyl-[protein] + UDP-N-acetyl-alpha-D-glucosamine = 3-O-(N-acetyl-alpha-D-glucosaminyl)-L-threonyl-[protein] + UDP + H(+). Protease activity is activated upon binding to 1D-myo-inositol hexakisphosphate (InsP6), which induces conformational reorganization. In terms of biological role, precursor of a cytotoxin, which enters into host cells and mediates autoprocessing to release the active toxin (N-acetylglucosaminyltransferase TcdA) into the host cytosol. Once entered into host cells, acidification in the endosome promotes the membrane insertion of the translocation region and formation of a pore, leading to translocation of the GT44 and peptidase C80 domains across the endosomal membrane. This activates the peptidase C80 domain and autocatalytic processing, releasing the N-terminal part (N-acetylglucosaminyltransferase TcdA), which constitutes the active part of the toxin, in the cytosol. Functionally, active form of the toxin, which is released into the host cytosol following autoprocessing and inactivates small GTPases. Acts by mediating monoglycosylation of small GTPases of the Rho family (Rac1, RhoA, RhoG and Cdc42) in host cells at the conserved threonine residue located in the switch I region ('Thr-37/35'), using UDP-N-acetyl-alpha-D-glucosamine as the sugar donor. Monoglycosylation of host small GTPases completely prevents the recognition of the downstream effector, blocking the GTPases in their inactive form, leading to actin cytoskeleton disruption and cell death. This chain is Toxin A (tcdA), found in Clostridium novyi.